Consider the following 438-residue polypeptide: Aspartate--tRNA(Asp/Asn) ligase (438 aa).

An L-aspartate-binding site is contributed by E176. Residues 198-201 (QLYK) are aspartate. R220 is a binding site for L-aspartate. Residues 220-222 (RAE), 228-230 (RHL), and E361 contribute to the ATP site. The Mg(2+) site is built by E361 and S364. L-aspartate is bound by residues S364 and R368. 409 to 412 (GADR) contributes to the ATP binding site.

It belongs to the class-II aminoacyl-tRNA synthetase family. Type 2 subfamily. Homodimer. Mg(2+) serves as cofactor.

The protein resides in the cytoplasm. It catalyses the reaction tRNA(Asx) + L-aspartate + ATP = L-aspartyl-tRNA(Asx) + AMP + diphosphate. Its function is as follows. Aspartyl-tRNA synthetase with relaxed tRNA specificity since it is able to aspartylate not only its cognate tRNA(Asp) but also tRNA(Asn). Reaction proceeds in two steps: L-aspartate is first activated by ATP to form Asp-AMP and then transferred to the acceptor end of tRNA(Asp/Asn). In Methanococcus vannielii (strain ATCC 35089 / DSM 1224 / JCM 13029 / OCM 148 / SB), this protein is Aspartate--tRNA(Asp/Asn) ligase.